A 135-amino-acid polypeptide reads, in one-letter code: MTGGGKSGGKASSGKNAQSRSSKAGLAFPVGRVHRLLRKGNYAQRVGAGAPVYLAAVLEYLAAEILELAGNAARDNKKTRIIPRHLQLAIRNDEELNKLLGHVTIAQGGVLPNIHQNLLPKKTGTKPGKNASQEL.

A disordered region spans residues 1-24 (MTGGGKSGGKASSGKNAQSRSSKA). Residues Lys6 and Lys10 each carry the N6-acetyllysine modification. N5-methylglutamine is present on Gln107. Ser132 is subject to Phosphoserine. The short motif at 132 to 133 (SQ) is the [ST]-Q motif element.

It belongs to the histone H2A family. The nucleosome is a histone octamer containing two molecules each of H2A, H2B, H3 and H4 assembled in one H3-H4 heterotetramer and two H2A-H2B heterodimers. The octamer wraps approximately 147 bp of DNA. In terms of processing, phosphorylated to form H2AS128ph (gamma-H2A) in response to DNA double-strand breaks (DSBs) generated by exogenous genotoxic agents and by stalled replication forks. Phosphorylation is dependent on the DNA damage checkpoint kinases MEC1/ATR and TEL1/ATM, spreads on either side of a detected DSB site and may mark the surrounding chromatin for recruitment of proteins required for DNA damage signaling and repair. Gamma-H2A is removed from the DNA prior to the strand invasion-primer extension step of the repair process and subsequently dephosphorylated. Dephosphorylation is necessary for efficient recovery from the DNA damage checkpoint. Post-translationally, acetylated by ESA1 to form H2AK4ac and H2AK7ac.

The protein localises to the nucleus. It localises to the chromosome. Core component of nucleosome which plays a central role in DNA double strand break (DSB) repair. Nucleosomes wrap and compact DNA into chromatin, limiting DNA accessibility to the cellular machineries which require DNA as a template. Histones thereby play a central role in transcription regulation, DNA repair, DNA replication and chromosomal stability. DNA accessibility is regulated via a complex set of post-translational modifications of histones, also called histone code, and nucleosome remodeling. The polypeptide is Histone H2A (HTA1) (Podospora anserina (Pleurage anserina)).